Reading from the N-terminus, the 156-residue chain is Transcriptional repressor NrdR (156 aa).

A zinc finger lies at 3-34 (CPYCGHLEDRVVDSRETQDGQATRRRRACLSC). The ATP-cone domain maps to 49–139 (PQVVKKDGRR…VYRAFRDVGE (91 aa)).

It belongs to the NrdR family. Requires Zn(2+) as cofactor.

Functionally, negatively regulates transcription of bacterial ribonucleotide reductase nrd genes and operons by binding to NrdR-boxes. This chain is Transcriptional repressor NrdR, found in Anaeromyxobacter dehalogenans (strain 2CP-C).